The primary structure comprises 188 residues: HTH-type transcriptional regulator Mb3439c (188 aa).

Positions 17 to 77 (EEVAAAILQA…AVLDHLGTKL (61 aa)) constitute an HTH tetR-type domain. The segment at residues 40–59 (SIRDIAARSKVNHGLVFRHF) is a DNA-binding region (H-T-H motif).

Negatively regulates the expression of sulfate ester dioxygenase Mb3440 and its own expression. The sequence is that of HTH-type transcriptional regulator Mb3439c from Mycobacterium bovis (strain ATCC BAA-935 / AF2122/97).